The chain runs to 346 residues: Holliday junction branch migration complex subunit RuvB (346 aa).

Residues 1–182 are large ATPase domain (RuvB-L); sequence MSERLVTSNE…FGVLCSMEYY (182 aa). Residues Leu21, Arg22, Gly63, Lys66, Thr67, Thr68, 129–131, Arg172, Tyr182, and Arg219 each bind ATP; that span reads EDY. A Mg(2+)-binding site is contributed by Thr67. Residues 183–253 form a small ATPAse domain (RuvB-S) region; that stretch reads TDEQLKEIII…AAKKSLEILE (71 aa). Residues 256-346 form a head domain (RuvB-H) region; sequence GEGFDRIDNK…DSKQCTLFEK (91 aa). 2 residues coordinate DNA: Arg311 and Arg316.

The protein belongs to the RuvB family. As to quaternary structure, homohexamer. Forms an RuvA(8)-RuvB(12)-Holliday junction (HJ) complex. HJ DNA is sandwiched between 2 RuvA tetramers; dsDNA enters through RuvA and exits via RuvB. An RuvB hexamer assembles on each DNA strand where it exits the tetramer. Each RuvB hexamer is contacted by two RuvA subunits (via domain III) on 2 adjacent RuvB subunits; this complex drives branch migration. In the full resolvosome a probable DNA-RuvA(4)-RuvB(12)-RuvC(2) complex forms which resolves the HJ.

Its subcellular location is the cytoplasm. It carries out the reaction ATP + H2O = ADP + phosphate + H(+). In terms of biological role, the RuvA-RuvB-RuvC complex processes Holliday junction (HJ) DNA during genetic recombination and DNA repair, while the RuvA-RuvB complex plays an important role in the rescue of blocked DNA replication forks via replication fork reversal (RFR). RuvA specifically binds to HJ cruciform DNA, conferring on it an open structure. The RuvB hexamer acts as an ATP-dependent pump, pulling dsDNA into and through the RuvAB complex. RuvB forms 2 homohexamers on either side of HJ DNA bound by 1 or 2 RuvA tetramers; 4 subunits per hexamer contact DNA at a time. Coordinated motions by a converter formed by DNA-disengaged RuvB subunits stimulates ATP hydrolysis and nucleotide exchange. Immobilization of the converter enables RuvB to convert the ATP-contained energy into a lever motion, pulling 2 nucleotides of DNA out of the RuvA tetramer per ATP hydrolyzed, thus driving DNA branch migration. The RuvB motors rotate together with the DNA substrate, which together with the progressing nucleotide cycle form the mechanistic basis for DNA recombination by continuous HJ branch migration. Branch migration allows RuvC to scan DNA until it finds its consensus sequence, where it cleaves and resolves cruciform DNA. This Clostridium perfringens (strain ATCC 13124 / DSM 756 / JCM 1290 / NCIMB 6125 / NCTC 8237 / Type A) protein is Holliday junction branch migration complex subunit RuvB.